The following is a 2561-amino-acid chain: Squalestatin hexaketide synthase (2561 aa).

The disordered stretch occupies residues 1-77 (MDVSKEEGQR…NGTTNITPEF (77 aa)). Residues 20-74 (NETTNGHTNGYTNGHTNGHTNGTTNATTNGTTNGTMNGTTNGTTNRTTNGTTNIT) are compositionally biased toward low complexity. The Ketosynthase family 3 (KS3) domain occupies 83–503 (QVPVAICGIG…GSNTHIIIDS (421 aa)). Active-site for beta-ketoacyl synthase activity residues include Cys-253, His-390, and His-427. A malonyl-CoA:ACP transacylase (MAT) domain region spans residues 603–925 (FIFTGQGAQW…LEAIGKLFCF (323 aa)). The segment at 972-1101 (HELLGERSLE…GLVTASVVIS (130 aa)) is N-terminal hotdog fold. The tract at residues 972–1253 (HELLGERSLE…RGFKCKRTDE (282 aa)) is dehydratase (DH) domain. The 286-residue stretch at 972–1257 (HELLGERSLE…CKRTDESFIQ (286 aa)) folds into the PKS/mFAS DH domain. His-1004 serves as the catalytic Proton acceptor; for dehydratase activity. Residues 1112-1257 (TFPRKVDTSR…CKRTDESFIQ (146 aa)) form a C-terminal hotdog fold region. Asp-1174 functions as the Proton donor; for dehydratase activity in the catalytic mechanism. The methyltransferase (CMet) domain stretch occupies residues 1421-1599 (SFFQAAGLNK…GFEGAGTVVL (179 aa)). The interval 1826–2146 (GMLNTLHWVG…RGVHMGRIVV (321 aa)) is enoyl reductase (ER) (ER) domain. Positions 2170-2343 (STYLLTGGMG…PASVIDIAAI (174 aa)) are ketoreductase (KR) domain. A Carrier domain is found at 2472-2550 (VLFAQEIAKR…SLGRLATKRL (79 aa)). At Ser-2509 the chain carries O-(pantetheine 4'-phosphoryl)serine.

It participates in secondary metabolite biosynthesis. Highly reducing polyketide synthase (HR-PKS); part of the gene cluster that mediates the biosynthesis of squalestatin S1 (SQS1, also known as zaragozic acid A), a heavily oxidized fungal polyketide that offers potent cholesterol lowering activity by targeting squalene synthase (SS). SQS1 is composed of a 2,8-dioxobicyclic[3.2.1]octane-3,4,5-tricarboxyclic acid core that is connected to two lipophilic polyketide arms. These initial steps feature the priming of an unusual benzoic acid starter unit onto the highly reducing polyketide synthase pks2, followed by oxaloacetate extension and product release to generate a tricarboxylic acid containing product. The phenylalanine ammonia lyase (PAL) M7 and the acyl-CoA ligase M9 are involved in transforming phenylalanine into benzoyl-CoA. The citrate synthase-like protein R3 is involved in connecting the C-alpha-carbons of the hexaketide chain and oxaloacetate to afford the tricarboxylic acid unit. The potential hydrolytic enzymes, M8 and M10, are in close proximity to pks2 and may participate in product release. On the other side, the tetraketide arm is synthesized by a the squalestatin tetraketide synthase pks1 and enzymatically esterified to the core in the last biosynthetic step, by the acetyltransferase M4. The biosynthesis of the tetraketide must involve 3 rounds of chain extension. After the first and second rounds methyl-transfer occurs, and in all rounds of extension the ketoreductase and dehydratase are active. The enoyl reductase and C-MeT of pks1 are not active in the final round of extension. The acetyltransferase M4 appears to have a broad substrate selectivity for its acyl CoA substrate, allowing the in vitro synthesis of novel squalestatins. The biosynthesis of SQS1 requires several oxidative steps likely performed by oxidoreductases M1, R1 and R2. Finally, in support of the identification of the cluster as being responsible for SQS1 production, the cluster contains a gene encoding a putative squalene synthase (SS) R6, suggesting a likely mechanism for self-resistance. The sequence is that of Squalestatin hexaketide synthase from Phoma sp. (strain ATCC 20986 / MF5453).